Consider the following 169-residue polypeptide: Protein-export protein SecB (169 aa).

This sequence belongs to the SecB family. In terms of assembly, homotetramer, a dimer of dimers. One homotetramer interacts with 1 SecA dimer.

It localises to the cytoplasm. Its function is as follows. One of the proteins required for the normal export of preproteins out of the cell cytoplasm. It is a molecular chaperone that binds to a subset of precursor proteins, maintaining them in a translocation-competent state. It also specifically binds to its receptor SecA. The sequence is that of Protein-export protein SecB from Mannheimia succiniciproducens (strain KCTC 0769BP / MBEL55E).